Here is a 173-residue protein sequence, read N- to C-terminus: 2-C-methyl-D-erythritol 2,4-cyclodiphosphate synthase (173 aa).

A divalent metal cation-binding residues include Asp-17 and His-19. 4-CDP-2-C-methyl-D-erythritol 2-phosphate-binding positions include 17 to 19 (DVH) and 49 to 50 (HS). An a divalent metal cation-binding site is contributed by His-57. Residues 76–80 (FPNTD), 147–150 (TTTE), and Arg-157 contribute to the 4-CDP-2-C-methyl-D-erythritol 2-phosphate site.

It belongs to the IspF family. Homotrimer. A divalent metal cation serves as cofactor.

It carries out the reaction 4-CDP-2-C-methyl-D-erythritol 2-phosphate = 2-C-methyl-D-erythritol 2,4-cyclic diphosphate + CMP. The protein operates within isoprenoid biosynthesis; isopentenyl diphosphate biosynthesis via DXP pathway; isopentenyl diphosphate from 1-deoxy-D-xylulose 5-phosphate: step 4/6. Involved in the biosynthesis of isopentenyl diphosphate (IPP) and dimethylallyl diphosphate (DMAPP), two major building blocks of isoprenoid compounds. Catalyzes the conversion of 4-diphosphocytidyl-2-C-methyl-D-erythritol 2-phosphate (CDP-ME2P) to 2-C-methyl-D-erythritol 2,4-cyclodiphosphate (ME-CPP) with a corresponding release of cytidine 5-monophosphate (CMP). This is 2-C-methyl-D-erythritol 2,4-cyclodiphosphate synthase from Ehrlichia ruminantium (strain Welgevonden).